A 157-amino-acid chain; its full sequence is MAEQASEQQNITEKEKEQLPLTIKGLSESLGIPFVDCLIPCNFCGKFLDYLEACEFEVKKLSLIWKDYCVFACCRVCCGATATYEFNQFYQQTVLGRDIELAAGRSIFEIDIRCQTCLAFLDIIEKLDCCGRGLPFHRVRNAWKGICRQCKHFYNDW.

Zinc fingers lie at residues 41–77 (CNFC…CRVC) and 114–150 (CQTC…CRQC).

Belongs to the papillomaviridae E6 protein family. In terms of assembly, forms homodimers. Interacts with ubiquitin-protein ligase UBE3A/E6-AP; this interaction stimulates UBE3A ubiquitin activity. Interacts with host BAK1.

Its subcellular location is the host cytoplasm. The protein resides in the host nucleus. Functionally, plays a major role in the induction and maintenance of cellular transformation. E6 associates with host UBE3A/E6-AP ubiquitin-protein ligase and modulates its activity. Protects host keratinocytes from apoptosis by mediating the degradation of host BAK1. May also inhibit host immune response. This chain is Protein E6, found in Human papillomavirus 36.